A 69-amino-acid polypeptide reads, in one-letter code: MPLTVKCPICKAPVEWVPQSAFKPFCSERCKLIDLGDWASEKHVIPVKAEFDPEAFDEFDLDEGDFFKE.

Zn(2+) is bound by residues Cys-7, Cys-10, Cys-26, and Cys-30.

This sequence belongs to the DNA gyrase inhibitor YacG family. In terms of assembly, interacts with GyrB. Requires Zn(2+) as cofactor.

Inhibits all the catalytic activities of DNA gyrase by preventing its interaction with DNA. Acts by binding directly to the C-terminal domain of GyrB, which probably disrupts DNA binding by the gyrase. This chain is DNA gyrase inhibitor YacG, found in Shewanella baltica (strain OS155 / ATCC BAA-1091).